A 424-amino-acid chain; its full sequence is Spindle pole component BBP1 (424 aa).

Ser29 is modified (phosphoserine). Basic and acidic residues predominate over residues 34 to 48 (YKDQEERRDRSRYAQ). The disordered stretch occupies residues 34 to 76 (YKDQEERRDRSRYAQDDTNFSMKFGNDSNRRSTNLSRSNSWSG). Positions 64-75 (RSTNLSRSNSWS) are enriched in low complexity. Residues Ser73 and Ser115 each carry the phosphoserine modification. The stretch at 229-355 (QMDLNSRDLE…KDMQRDNYES (127 aa)) forms a coiled coil.

Belongs to the BBP1 family. In terms of assembly, homodimer. Interacts with KAR1, MPS2 and SPC29.

Its subcellular location is the cytoplasm. The protein resides in the cytoskeleton. It is found in the microtubule organizing center. It localises to the spindle pole body. In terms of biological role, component of the spindle pole body (SPB) required for insertion of the nascent SPB into the nuclear envelope and for the proper execution of spindle pole body (SPB) duplication. Connects the central plaque of the SPB with the half-bridge. Required for proper localization of CDC5 at the SPB and for proper M-phase progression. This is Spindle pole component BBP1 (BBP1) from Saccharomyces cerevisiae (strain FostersO) (Baker's yeast).